The sequence spans 496 residues: Cytosol aminopeptidase (496 aa).

Residues lysine 258 and aspartate 263 each coordinate Mn(2+). Residue lysine 270 is part of the active site. 3 residues coordinate Mn(2+): aspartate 281, aspartate 340, and glutamate 342. The active site involves arginine 344.

Belongs to the peptidase M17 family. Mn(2+) is required as a cofactor.

Its subcellular location is the cytoplasm. The enzyme catalyses Release of an N-terminal amino acid, Xaa-|-Yaa-, in which Xaa is preferably Leu, but may be other amino acids including Pro although not Arg or Lys, and Yaa may be Pro. Amino acid amides and methyl esters are also readily hydrolyzed, but rates on arylamides are exceedingly low.. It carries out the reaction Release of an N-terminal amino acid, preferentially leucine, but not glutamic or aspartic acids.. Presumably involved in the processing and regular turnover of intracellular proteins. Catalyzes the removal of unsubstituted N-terminal amino acids from various peptides. The protein is Cytosol aminopeptidase (pepA) of Helicobacter pylori (strain J99 / ATCC 700824) (Campylobacter pylori J99).